The following is a 485-amino-acid chain: Glutamyl-tRNA(Gln) amidotransferase subunit A (485 aa).

Residues lysine 79 and serine 154 each act as charge relay system in the active site. Serine 178 (acyl-ester intermediate) is an active-site residue.

It belongs to the amidase family. GatA subfamily. As to quaternary structure, heterotrimer of A, B and C subunits.

The catalysed reaction is L-glutamyl-tRNA(Gln) + L-glutamine + ATP + H2O = L-glutaminyl-tRNA(Gln) + L-glutamate + ADP + phosphate + H(+). Allows the formation of correctly charged Gln-tRNA(Gln) through the transamidation of misacylated Glu-tRNA(Gln) in organisms which lack glutaminyl-tRNA synthetase. The reaction takes place in the presence of glutamine and ATP through an activated gamma-phospho-Glu-tRNA(Gln). The protein is Glutamyl-tRNA(Gln) amidotransferase subunit A of Staphylococcus aureus (strain bovine RF122 / ET3-1).